The primary structure comprises 163 residues: Nucleotide-binding protein EAT1b_2037 (163 aa).

It belongs to the YajQ family.

Nucleotide-binding protein. The polypeptide is Nucleotide-binding protein EAT1b_2037 (Exiguobacterium sp. (strain ATCC BAA-1283 / AT1b)).